Reading from the N-terminus, the 85-residue chain is Protein U62 (85 aa).

It belongs to the herpesviridae UL91 family.

This Homo sapiens (Human) protein is Protein U62 (U62).